The primary structure comprises 486 residues: Hematopoietic lineage cell-specific protein (486 aa).

An involved in HAX-1 binding region spans residues Phe-27–Asp-66. Lys-41 bears the N6-acetyllysine mark. 3 Cortactin repeats span residues Ala-79 to Asp-115, Ala-116 to Asp-152, and Tyr-153 to Asp-189. At Lys-123 the chain carries N6-acetyllysine. Tyr-140 carries the post-translational modification Phosphotyrosine. A Cortactin 4; truncated repeat occupies Tyr-190–Phe-212. Residue Lys-192 is modified to N6-acetyllysine. Tyr-198 carries the phosphotyrosine modification. Tyr-222 carries the phosphotyrosine; by FGR modification. Lys-241 is modified (N6-acetyllysine). A compositionally biased stretch (basic and acidic residues) spans Glu-243–Pro-276. Residues Glu-243–Pro-419 are disordered. Residue Ser-275 is modified to Phosphoserine. Phosphothreonine is present on Thr-308. The segment covering Glu-315–Pro-324 has biased composition (basic and acidic residues). Acidic residues-rich tracts occupy residues Gln-353–Glu-383 and Glu-390–Asp-405. Phosphotyrosine; by SYK and FES occurs at positions 378 and 397. Low complexity predominate over residues Ser-406 to Pro-419. The SH3 domain maps to Ala-428 to Glu-486.

In terms of assembly, associates with the SH2 and SH3 domains of LCK. Binding to he LCK SH3 domain occurs constitutively, while binding to the LCK SH2 domain occurs only upon TCR stimulation. A similar binding pattern was observed with LYN, but not with FYN in which the FYN SH2 region associates upon TCR stimulation but the FYN SH3 region does not associate regardless of TCR stimulation. Directly associates with HAX1, through binding to its C-terminal region. Interacts with HS1BP3. Interacts with FES/FPS. Interacts (via SH2 domain) with FGR. Forms a multiprotein complex with LYN and ANKRD54. Phosphorylated by FES. Phosphorylated by LYN, FYN and FGR after cross-linking of surface IgM on B-cells. Phosphorylation by LYN, FYN and FGR requires prior phosphorylation by SYK or FES. In terms of tissue distribution, expressed only in tissues and cells of hematopoietic origin.

The protein resides in the membrane. It localises to the cytoplasm. The protein localises to the mitochondrion. Substrate of the antigen receptor-coupled tyrosine kinase. Plays a role in antigen receptor signaling for both clonal expansion and deletion in lymphoid cells. May also be involved in the regulation of gene expression. This Homo sapiens (Human) protein is Hematopoietic lineage cell-specific protein (HCLS1).